Reading from the N-terminus, the 567-residue chain is Urease subunit alpha (567 aa).

A Urease domain is found at 129-567 (GGVDTHIHFI…LPMAQRYFLF (439 aa)). His-134, His-136, and Lys-217 together coordinate Ni(2+). Lys-217 carries the N6-carboxylysine modification. Residue His-219 participates in substrate binding. His-246 and His-272 together coordinate Ni(2+). His-320 functions as the Proton donor in the catalytic mechanism. Ni(2+) is bound at residue Asp-360.

Belongs to the metallo-dependent hydrolases superfamily. Urease alpha subunit family. Heterotrimer of UreA (gamma), UreB (beta) and UreC (alpha) subunits. Three heterotrimers associate to form the active enzyme. It depends on Ni cation as a cofactor. Carboxylation allows a single lysine to coordinate two nickel ions.

Its subcellular location is the cytoplasm. The catalysed reaction is urea + 2 H2O + H(+) = hydrogencarbonate + 2 NH4(+). Its pathway is nitrogen metabolism; urea degradation; CO(2) and NH(3) from urea (urease route): step 1/1. This is Urease subunit alpha from Proteus hauseri.